The sequence spans 246 residues: Orotidine 5'-phosphate decarboxylase (246 aa).

Residues Asp22, Lys44, 71-80 (DLKYHDIPHT), Thr130, Arg191, Gln201, Gly221, and Arg222 contribute to the substrate site. Lys73 acts as the Proton donor in catalysis.

It belongs to the OMP decarboxylase family. Type 1 subfamily. In terms of assembly, homodimer.

The enzyme catalyses orotidine 5'-phosphate + H(+) = UMP + CO2. It functions in the pathway pyrimidine metabolism; UMP biosynthesis via de novo pathway; UMP from orotate: step 2/2. Functionally, catalyzes the decarboxylation of orotidine 5'-monophosphate (OMP) to uridine 5'-monophosphate (UMP). The chain is Orotidine 5'-phosphate decarboxylase from Neisseria gonorrhoeae (strain ATCC 700825 / FA 1090).